Reading from the N-terminus, the 391-residue chain is Succinate--CoA ligase [ADP-forming] subunit beta (391 aa).

The ATP-grasp domain maps to 9–248; sequence KDILRKFGVA…ITEEDPFEVE (240 aa). ATP contacts are provided by residues Lys50, 57 to 59, Glu103, Met106, and Glu111; that span reads GRG. The Mg(2+) site is built by Asn203 and Asp217. Substrate-binding positions include Asn268 and 325 to 327; that span reads GIV.

This sequence belongs to the succinate/malate CoA ligase beta subunit family. As to quaternary structure, heterotetramer of two alpha and two beta subunits. Mg(2+) is required as a cofactor.

The enzyme catalyses succinate + ATP + CoA = succinyl-CoA + ADP + phosphate. It catalyses the reaction GTP + succinate + CoA = succinyl-CoA + GDP + phosphate. It participates in carbohydrate metabolism; tricarboxylic acid cycle; succinate from succinyl-CoA (ligase route): step 1/1. Functionally, succinyl-CoA synthetase functions in the citric acid cycle (TCA), coupling the hydrolysis of succinyl-CoA to the synthesis of either ATP or GTP and thus represents the only step of substrate-level phosphorylation in the TCA. The beta subunit provides nucleotide specificity of the enzyme and binds the substrate succinate, while the binding sites for coenzyme A and phosphate are found in the alpha subunit. The polypeptide is Succinate--CoA ligase [ADP-forming] subunit beta (Chlorobium phaeovibrioides (strain DSM 265 / 1930) (Prosthecochloris vibrioformis (strain DSM 265))).